A 507-amino-acid chain; its full sequence is Maturase K (507 aa).

Belongs to the intron maturase 2 family. MatK subfamily.

It is found in the plastid. It localises to the chloroplast. Usually encoded in the trnK tRNA gene intron. Probably assists in splicing its own and other chloroplast group II introns. The protein is Maturase K of Lyonia ferruginea (Rusty staggerbush).